A 422-amino-acid chain; its full sequence is Transcription initiation factor TFIID subunit 15b (422 aa).

Disordered stretches follow at residues 1-24 (MAGM…DGYG), 47-94 (YGGR…PNPS), 111-263 (ALAP…DAAT), and 368-422 (MAEK…SRPY). Gly residues-rich tracts occupy residues 8–24 (DGGG…DGYG) and 47–83 (YGGR…GGGG). A RanBP2-type zinc finger spans residues 84-115 (RDGDWRCPNPSCGNVNFARRVECNKCGALAPS). The segment covering 123 to 133 (DRGGGGYSRGG) has biased composition (gly residues). The segment covering 134-156 (GDSDRGGGRGGRNDSGRSYESSR) has biased composition (basic and acidic residues). 2 stretches are compositionally biased toward gly residues: residues 219 to 229 (PSYGGPRGGYG) and 236 to 247 (GGRGGRSGGYDG). Positions 252–263 (RRQEASYEDAAT) are enriched in basic and acidic residues. Positions 280–371 (ARIYISNLPP…NKISVTMAEK (92 aa)) constitute an RRM domain. Over residues 382 to 397 (RGGGRGGGGGGYGGGG) the composition is skewed to gly residues.

The protein belongs to the TAF15 family. In terms of assembly, component of the TFIID complex. TFIID is composed of TATA binding protein (TBP) and a number of TBP-associated factors (TAFs) whose MWs range from 14-217 kDa. Interacts with TAF4, TAF4B, TAF5, TAF12B and TAF14. As to expression, expressed in roots, leaves and inflorescences.

The protein resides in the nucleus. Its function is as follows. TAFs are components of the transcription factor IID (TFIID) complex that is essential for mediating regulation of RNA polymerase transcription. This is Transcription initiation factor TFIID subunit 15b (TAF15B) from Arabidopsis thaliana (Mouse-ear cress).